The sequence spans 604 residues: BTB/POZ domain-containing protein SR1IP1 (604 aa).

The 70-residue stretch at 27–96 folds into the BTB domain; that stretch reads SDVTVHVGEA…CYGINFDMST (70 aa). One can recognise an NPH3 domain in the interval 201–474; it reads DWWAEDLTVL…VQVLYYEQQR (274 aa). Tyr415 is modified (phosphotyrosine). Disordered stretches follow at residues 478–499 and 532–604; these read EVTN…VLPP and FEKE…HSIS. The stretch at 500-541 forms a coiled coil; that stretch reads KLSSYTDELSKLKRENQDLKLELLKMKMKLKEFEKESEKKTS. Positions 541–558 are enriched in low complexity; the sequence is SSSTISTNPSSPISTAST. Residues 591-604 are compositionally biased toward basic residues; it reads GRTKPPKDRRHSIS.

It belongs to the NPH3 family. As to quaternary structure, interacts with CAMTA3 and CUL3A.

The protein operates within protein modification; protein ubiquitination. Its function is as follows. Acts as a substrate-specific adapter of an E3 ubiquitin-protein ligase complex (CUL3-RBX1-BTB) which mediates the ubiquitination and subsequent proteasomal degradation of target proteins. Involved in disease resistance. Acts as a substrate adapter that recruits CAMTA3/SR1 for ubiquitination and degradation during pathogen infection. Acts as a positive regulator of plant defense by removing the defense suppressor CAMTA3/SR1. The polypeptide is BTB/POZ domain-containing protein SR1IP1 (Arabidopsis thaliana (Mouse-ear cress)).